We begin with the raw amino-acid sequence, 868 residues long: MAAKEKVAKETPLMKQYNEIKRKYPDACLLFRVGDFYETFGEDAIRASKILGITLTKRGAGSDTETALAGFPHHSINTYLPKLVKAGLRVAICDQLEDPKMTKTIVKRGVTELVTPGVSLNDEVLQSKTNNFLASVCFANKNIGISFLDVSTGEFLTAQGNAEYIDKLLQNFNPSEVLVPKNCKSEFKDAFGEDFHSFYLEDWIYKEDYALETLTKHFQTNSLKGFGVEELKEGIISAGAILYYLSETQHNRVQHITAIQRIAEDAYVWMDRFTIRNLELYHSYNPNAVTLLDVIDKTLSPMGGRLLKRWLALPLKDTNKIKGRHAVVSYLKSNPEILHNIQYQIKQISDLERLISKIAAGKVSPREIVYLKESLDAIIPIKTLALESPQEAVKVIGDSLHSCDLLREKIKTTLNQDAPVAISKGNAIATGVNEELDELRAISTSGKEFLEGIERRESERTGISSLKISFNNVFGYYIEVRNTHKDKVPEEWIRKQTLVNAERYITEELKEYETKILGAEEKIHKIESELFEQLVNWIATYIKPVQMNAYLVAQLDCLCSFTQMAVENQYVCPEIDDTFELDIKNGRHPVIEKQLPVGTPYIANDVFLDREKQQIIMITGPNMSGKSAILRQTALIVLLAQMGSFVPADSVRMGIVDKIFTRVGASDNISMGESTFMVEMNETASILNNISDRSLVLLDEIGRGTSTYDGISIAWAIAEFLHEHPSKAKTLFATHYHELNEMTESLPRIQNYNVAVKELKDTVLFVRKLVKGGSAHSFGIHVAKMAGMPQLVISKAQKLLKKLEKNHSSDALNGIKSANDEMQMSFFNLDDPLLEEIKEEILSLDINAITPVEALMKLNEIKRMLVKK.

620-627 contributes to the ATP binding site; the sequence is GPNMSGKS.

This sequence belongs to the DNA mismatch repair MutS family.

Functionally, this protein is involved in the repair of mismatches in DNA. It is possible that it carries out the mismatch recognition step. This protein has a weak ATPase activity. This is DNA mismatch repair protein MutS from Flavobacterium johnsoniae (strain ATCC 17061 / DSM 2064 / JCM 8514 / BCRC 14874 / CCUG 350202 / NBRC 14942 / NCIMB 11054 / UW101) (Cytophaga johnsonae).